Consider the following 216-residue polypeptide: Probable nicotinate-nucleotide adenylyltransferase (216 aa).

The protein belongs to the NadD family.

It carries out the reaction nicotinate beta-D-ribonucleotide + ATP + H(+) = deamido-NAD(+) + diphosphate. It participates in cofactor biosynthesis; NAD(+) biosynthesis; deamido-NAD(+) from nicotinate D-ribonucleotide: step 1/1. Functionally, catalyzes the reversible adenylation of nicotinate mononucleotide (NaMN) to nicotinic acid adenine dinucleotide (NaAD). This chain is Probable nicotinate-nucleotide adenylyltransferase, found in Shewanella pealeana (strain ATCC 700345 / ANG-SQ1).